The following is a 293-amino-acid chain: Movement protein BC1 (293 aa).

This sequence belongs to the begomovirus movement protein BC1 family. As to quaternary structure, binds to dimeric supercoiled plasmid DNA. In terms of processing, phosphorylated.

The protein localises to the host cell membrane. Its subcellular location is the host microsome membrane. It is found in the host endoplasmic reticulum membrane. Its function is as follows. Transports viral genome to neighboring plant cells directly through plasmosdesmata, without any budding. The movement protein allows efficient cell to cell propagation, by bypassing the host cell wall barrier. Begomovirus genome is shuttled out of nucleus by Nuclear shuttle protein (NSP) and the movement protein transports the DNA-NSP complex to cell plasmodesmata and facilitates further movement across the cell wall. This is Movement protein BC1 from Macroptilium lathyroides (Lima bean).